A 1520-amino-acid polypeptide reads, in one-letter code: Protein TALPID3 (1520 aa).

Residues 322 to 370 (LSEDTDFDGQKSPLETPAPRRFAPVPVSRDGKITKRESPTEEKENMEMN) form a disordered region. The segment covering 350 to 367 (RDGKITKRESPTEEKENM) has biased composition (basic and acidic residues). A Phosphoserine modification is found at S426. The interval 485–572 (SVLKDAAKIL…YEQKRFDPKN (88 aa)) is required for centrosomal localization. Positions 487–519 (LKDAAKILRGVQNNKKVLEENLEAIVRAKDGAA) form a coiled coil. 7 disordered regions span residues 568–632 (FDPK…RSGL), 759–793 (NSDSMPPAGVTVNKPRPVTVTTSIPPASRKGNAGV), 826–848 (VSYSSTDGASSPPSPKEASLPPL), 1060–1093 (TPQPTPPCSPSPVREHVRVKTPDSSPCESDPDAA), 1145–1170 (SSPELPKPWDSGDLPLDEENPNSLQE), 1184–1230 (EEPE…ENTL), and 1500–1520 (SQSLSTSSMHGGTESSGTDTF). Polar residues-rich tracts occupy residues 587 to 596 (ANNQEKTVNR) and 605 to 616 (QKQTQEQFTSPP). Positions 826 to 836 (VSYSSTDGASS) are enriched in polar residues. A phosphothreonine mark is found at T1060 and T1064. A compositionally biased stretch (pro residues) spans 1060–1069 (TPQPTPPCSP). S1068 is modified (phosphoserine). Phosphothreonine is present on T1080. Residue S1083 is modified to Phosphoserine. The segment covering 1195–1205 (PAPPEPAPSAP) has biased composition (pro residues). Polar residues predominate over residues 1217–1230 (RVPSSGSSTLENTL).

This sequence belongs to the TALPID3 family. Interacts with CEP120. Interacts with CCP110, CEP290, CEP97, KIF24. Expressed in photoreceptor cells (at protein level).

The protein localises to the cytoplasm. The protein resides in the cytoskeleton. It is found in the microtubule organizing center. Its subcellular location is the centrosome. It localises to the photoreceptor inner segment. The protein localises to the centriole. The protein resides in the cilium basal body. In terms of biological role, required for ciliogenesis and sonic hedgehog/SHH signaling. Required for the centrosomal recruitment of RAB8A and for the targeting of centriole satellite proteins to centrosomes such as of PCM1. May play a role in early ciliogenesis in the disappearance of centriolar satellites that preceeds ciliary vesicle formation. Involved in regulation of cell intracellular organization. Involved in regulation of cell polarity. Required for asymmetrical localization of CEP120 to daughter centrioles. This chain is Protein TALPID3 (Talpid3), found in Mus musculus (Mouse).